Consider the following 699-residue polypeptide: Ubiquitin-like modifier-activating enzyme atg7 (699 aa).

The GXGXXG motif motif lies at Gly370–Gly375. The Glycyl thioester intermediate role is filled by Cys550. The disordered stretch occupies residues Met680–Ile699. The span at Trp682 to Ile699 shows a compositional bias: acidic residues.

It belongs to the ATG7 family. In terms of assembly, homodimer.

The protein localises to the cytoplasm. The protein resides in the preautophagosomal structure. Its function is as follows. E1-like activating enzyme involved in the 2 ubiquitin-like systems required for cytoplasm to vacuole transport (Cvt) and autophagy. Activates atg12 for its conjugation with apg-4/atg5 and apg-6/atg8 for its conjugation with phosphatidylethanolamine. Both systems are needed for the apg-6/atg8 association to Cvt vesicles and autophagosomes membranes. Autophagy is essential for maintenance of amino acid levels and protein synthesis under nitrogen starvation. Required for selective autophagic degradation of the nucleus (nucleophagy) as well as for mitophagy which contributes to regulate mitochondrial quantity and quality by eliminating the mitochondria to a basal level to fulfill cellular energy requirements and preventing excess ROS production. Plays a role in the regulation of filamentous growth and chronological longevity. The chain is Ubiquitin-like modifier-activating enzyme atg7 (apg-5) from Neurospora crassa (strain ATCC 24698 / 74-OR23-1A / CBS 708.71 / DSM 1257 / FGSC 987).